A 569-amino-acid chain; its full sequence is Putative diguanylate cyclase DgcQ (569 aa).

Transmembrane regions (helical) follow at residues 25–45 (LGPGHVVNLCFIVVLLFSTLL) and 365–385 (IALTLLWALFTTMLLLSWYVI). In terms of domain architecture, GGDEF spans 433–568 (HPFSVIQVDL…GRNRVFASDN (136 aa)). Position 441 (Asp441) interacts with Mg(2+). The substrate site is built by Asn449, His454, and Asp458. Glu484 lines the Mg(2+) pocket. Glu484 (proton acceptor) is an active-site residue.

In terms of assembly, homodimer. It depends on Mg(2+) as a cofactor.

It is found in the cell inner membrane. The enzyme catalyses 2 GTP = 3',3'-c-di-GMP + 2 diphosphate. The protein operates within glycan metabolism; bacterial cellulose biosynthesis. It functions in the pathway purine metabolism; 3',5'-cyclic di-GMP biosynthesis. In terms of biological role, catalyzes the synthesis of cyclic-di-GMP (c-di-GMP) via the condensation of 2 GTP molecules. Cyclic-di-GMP is a second messenger which controls cell surface-associated traits in bacteria. Involved in the regulation of cellulose production. This is Putative diguanylate cyclase DgcQ from Shigella flexneri.